The sequence spans 165 residues: Peptide deformylase (165 aa).

Fe cation-binding residues include C88 and H130. E131 is a catalytic residue. H134 is a Fe cation binding site.

It belongs to the polypeptide deformylase family. It depends on Fe(2+) as a cofactor.

The enzyme catalyses N-terminal N-formyl-L-methionyl-[peptide] + H2O = N-terminal L-methionyl-[peptide] + formate. Its function is as follows. Removes the formyl group from the N-terminal Met of newly synthesized proteins. Requires at least a dipeptide for an efficient rate of reaction. N-terminal L-methionine is a prerequisite for activity but the enzyme has broad specificity at other positions. This is Peptide deformylase from Borreliella burgdorferi (strain ATCC 35210 / DSM 4680 / CIP 102532 / B31) (Borrelia burgdorferi).